Consider the following 160-residue polypeptide: Putative 4-hydroxy-4-methyl-2-oxoglutarate aldolase (160 aa).

Substrate contacts are provided by residues 75–78 and Arg97; that span reads GDLI. An a divalent metal cation-binding site is contributed by Asp98.

Belongs to the class II aldolase/RraA-like family. As to quaternary structure, homotrimer. The cofactor is a divalent metal cation.

It catalyses the reaction 4-hydroxy-4-methyl-2-oxoglutarate = 2 pyruvate. The catalysed reaction is oxaloacetate + H(+) = pyruvate + CO2. Its function is as follows. Catalyzes the aldol cleavage of 4-hydroxy-4-methyl-2-oxoglutarate (HMG) into 2 molecules of pyruvate. Also contains a secondary oxaloacetate (OAA) decarboxylase activity due to the common pyruvate enolate transition state formed following C-C bond cleavage in the retro-aldol and decarboxylation reactions. This Rhodospirillum centenum (strain ATCC 51521 / SW) protein is Putative 4-hydroxy-4-methyl-2-oxoglutarate aldolase.